The following is a 149-amino-acid chain: Protegrin-3 (149 aa).

Residues 1 to 29 (METQRASLCLGRWSLWLLLLALVVPSASA) form the signal peptide. A propeptide spanning residues 30–130 (QALSYREAVL…DITCNEVQGV (101 aa)) is cleaved from the precursor. Residues 61–80 (DQPPKADEDPGTPKPVSFTV) are disordered. Cystine bridges form between C85–C96, C107–C124, C136–C145, and C138–C143. Arginine amide is present on R148.

It belongs to the cathelicidin family.

The protein resides in the secreted. Microbicidal activity. Active against E.coli, Listeria monocytogenes and C.albicans, in vitro. This is Protegrin-3 (NPG3) from Sus scrofa (Pig).